The sequence spans 1274 residues: MLLLQCRNPTSPPKPCGLVPNVKMSLLVFLGLLGVSAAMPFQMPMPRMPGFSSKSEEMMRYNQFNFMNAPPMMPMGPYGNGMPMPPHMPPQYPPYQMPMWPPPVPNGWQQPPMPNFPSKTDQTQETAKPNQTNPQEPQPQKQPLKEPPNEAARAKDDAQPPQPFPPFGNGLYPYPQPPWPIPQRGPPTAFGRPKFSNEEGNPYYAFFGYHGFGGRPYYSEEMFEDYEKPKEKDPPKPEDPPPDDPPPEASTNSTVPDANATQSIPEGGNDTSPIGNTGPGPNAGNNPTVQNGVFPPPKVNVSGQGVPKSQIPWRPSQPNIYENYPYPNYPSERQWQTTGTQGPRQNGPGYRNPQVERGPQWNSFAWEGKQATRPGNPTYGKPPSPTSGVNYAGNPVHFGRNLPGPNKPFVGANPASNKPFVGANPASNKPFVGANPASNKPFVGANPASNKPFVGANPASNKPYVGANPASNKPFIGANPAANKPSIGTNPAANKPSIGTNPAANKPFVRNNVGANKPFVGTNPSSNQPFLRSNQASNKPFMRSNQASNKPFVGTNVASVGPKQVTVSHNMKTQNPKEKSLGQKERTVTPTKDASNPWRSAKQYGINNPNYNLPRSEGSMVGPNFNSFDQQENSYFSKGASKRVPSPNIQIQSQNLPKGIALEPRRTPFQSETKKPELKHGTHQPAYPKKIPSPTRKHFPAERNTWNRQKILPPLKEDYGRQDENLRHPSYGSRGNIFYHEYTNPYHNEKSQYIKSNPWDKSSPSTMMRPENPQYTMTSLDQKETEQYNEEDPIDPNEDESFPGQSRWGDEEMNFKGNPTVRQYEGEHYASTLAKEYLPYSLSNPPKPSEDFPYSEFYPWNPQETFPIYNPGPTIAPPVDPRSYYVNNAIGQEESTLFPSWTSWDHRNQAERQKESEPYFNRNVWDQSINLHKSNIPNHPYSTTSPARFPKDPTWFEGENLNYDLQITSLSPPEREQLAFPDFLPQSYPTGQNEAHLFHQSQRGSCCIGGSTGHKDNVLALQDYTSSYGLPPRKNQETSPVHTESSYIKYARPNVSPASILPSQRNISENKLTAESPNPSPFGDGVPTVRKNTPYSGKNQLETGIVAFSEASSSQPKNTPCLKSDLGGDRRDVLKQFFEGSQLSERTAGLTPEQLVIGIPDKGSGPDSIQSEVQGKEGEMQQQRPPTIMKLPCFGSNSKFHSSTTGPPINNRRPTLLNGALSTPTESPNTLVGLATREQLKSINVDKLNADEHTTLESFQGTSPQDQGCLLLQA.

The N-terminal stretch at 1-38 is a signal peptide; sequence MLLLQCRNPTSPPKPCGLVPNVKMSLLVFLGLLGVSAA. Residues 103-115 are compositionally biased toward pro residues; the sequence is PVPNGWQQPPMPN. Disordered regions lie at residues 103-413, 476-610, 668-700, 712-734, and 753-814; these read PVPN…VGAN, IGAN…NNPN, PFQS…KHFP, LPPL…YGSR, and YIKS…EEMN. Residues 117–127 show a composition bias toward polar residues; the sequence is PSKTDQTQETA. Residues 128–142 are compositionally biased toward low complexity; sequence KPNQTNPQEPQPQKQ. Asn-130 carries an N-linked (GlcNAc...) asparagine glycan. The segment covering 143–158 has biased composition (basic and acidic residues); it reads PLKEPPNEAARAKDDA. Residues 174-185 show a composition bias toward pro residues; sequence YPQPPWPIPQRG. Residues Ser-196 and Ser-219 each carry the phosphoserine modification. Basic and acidic residues predominate over residues 225 to 239; sequence DYEKPKEKDPPKPED. Over residues 249 to 272 the composition is skewed to polar residues; sequence ASTNSTVPDANATQSIPEGGNDTS. 3 N-linked (GlcNAc...) asparagine glycosylation sites follow: Asn-252, Asn-259, and Asn-269. Low complexity predominate over residues 273 to 287; the sequence is PIGNTGPGPNAGNNP. Residue Asn-300 is glycosylated (N-linked (GlcNAc...) asparagine). A compositionally biased stretch (low complexity) spans 318 to 330; it reads PNIYENYPYPNYP. Composition is skewed to polar residues over residues 331–344, 486–503, 522–549, and 565–574; these read SERQ…QGPR, SIGT…TNPA, TNPS…QASN, and VTVSHNMKTQ. Basic and acidic residues predominate over residues 575-587; the sequence is NPKEKSLGQKERT. The span at 588 to 598 shows a compositional bias: polar residues; it reads VTPTKDASNPW. The segment covering 715–727 has biased composition (basic and acidic residues); it reads LKEDYGRQDENLR. Residues 753-766 show a composition bias toward polar residues; sequence YIKSNPWDKSSPST. Acidic residues predominate over residues 787-801; it reads QYNEEDPIDPNEDES. N-linked (GlcNAc...) asparagine glycosylation is present at Asn-1066. Disordered stretches follow at residues 1071 to 1097 and 1109 to 1128; these read KLTA…PYSG and SEAS…DLGG.

Phosphorylated by FAM20C in vitro. Expressed in developing teeth.

The protein localises to the secreted. The protein resides in the extracellular space. Its subcellular location is the extracellular matrix. Involved in the mineralization and structural organization of enamel. Involved in the extension of enamel during the secretory stage of dental enamel formation. The chain is Enamelin (Enam) from Mus musculus (Mouse).